The sequence spans 136 residues: Urease subunit beta (136 aa).

A disordered region spans residues 113-136 (NDEYAGVFGDNGAENVNKKGRKRS).

It belongs to the urease beta subunit family. Heterotrimer of UreA (gamma), UreB (beta) and UreC (alpha) subunits. Three heterotrimers associate to form the active enzyme.

It localises to the cytoplasm. The enzyme catalyses urea + 2 H2O + H(+) = hydrogencarbonate + 2 NH4(+). Its pathway is nitrogen metabolism; urea degradation; CO(2) and NH(3) from urea (urease route): step 1/1. This is Urease subunit beta from Staphylococcus aureus (strain Newman).